The sequence spans 339 residues: Phosphate acyltransferase (339 aa).

Belongs to the PlsX family. Homodimer. Probably interacts with PlsY.

Its subcellular location is the cytoplasm. It catalyses the reaction a fatty acyl-[ACP] + phosphate = an acyl phosphate + holo-[ACP]. Its pathway is lipid metabolism; phospholipid metabolism. Catalyzes the reversible formation of acyl-phosphate (acyl-PO(4)) from acyl-[acyl-carrier-protein] (acyl-ACP). This enzyme utilizes acyl-ACP as fatty acyl donor, but not acyl-CoA. This Moorella thermoacetica (strain ATCC 39073 / JCM 9320) protein is Phosphate acyltransferase.